Reading from the N-terminus, the 167-residue chain is MEAIIKPQEVKVGIAEWQVLRAPGRLITLGLGSCVGIALYDSLNRMGGLAHIMLPDSSQFQDRSNRAKFADLAILDLVAALIGRGARRGRLVAKIAGGAQMFTSGDRHLSLLNIGQRNAAMVRQTLQELAIPLVAEDTGGNYGRTMIFDLESGDVLIRTIGRPLKVI.

Belongs to the CheD family.

The catalysed reaction is L-glutaminyl-[protein] + H2O = L-glutamyl-[protein] + NH4(+). In terms of biological role, probably deamidates glutamine residues to glutamate on methyl-accepting chemotaxis receptors (MCPs), playing an important role in chemotaxis. The polypeptide is Probable chemoreceptor glutamine deamidase CheD (Moorella thermoacetica (strain ATCC 39073 / JCM 9320)).